A 258-amino-acid chain; its full sequence is Thiazole synthase (258 aa).

Lys97 serves as the catalytic Schiff-base intermediate with DXP. 1-deoxy-D-xylulose 5-phosphate-binding positions include Gly158, 184 to 185 (AG), and 206 to 207 (NT).

The protein belongs to the ThiG family. In terms of assembly, homotetramer. Forms heterodimers with either ThiH or ThiS.

It is found in the cytoplasm. It catalyses the reaction [ThiS sulfur-carrier protein]-C-terminal-Gly-aminoethanethioate + 2-iminoacetate + 1-deoxy-D-xylulose 5-phosphate = [ThiS sulfur-carrier protein]-C-terminal Gly-Gly + 2-[(2R,5Z)-2-carboxy-4-methylthiazol-5(2H)-ylidene]ethyl phosphate + 2 H2O + H(+). The protein operates within cofactor biosynthesis; thiamine diphosphate biosynthesis. In terms of biological role, catalyzes the rearrangement of 1-deoxy-D-xylulose 5-phosphate (DXP) to produce the thiazole phosphate moiety of thiamine. Sulfur is provided by the thiocarboxylate moiety of the carrier protein ThiS. In vitro, sulfur can be provided by H(2)S. This is Thiazole synthase from Marinomonas sp. (strain MWYL1).